A 225-amino-acid polypeptide reads, in one-letter code: MQIRWFGHSAFMVEVQGLKLLIDPWISNPLSPTSPQEVANMRPTHILITHDHFDHMGDAVDISKAAGAPIVGTYELTLEVAEKGIPEAQTVPMNIGGTIKLGDGVEVYMTPALHTANRGAPSGFVIATPQGTVYHAGDTGLFRDMELIAELYDIDVAMLPIGSVFTMGPREAAIATQFLRPRRVVPMHYNTFPLIRQDPEDFKARVEAVSRAKVYIMKPGDVLKL.

It belongs to the UPF0173 family.

This is UPF0173 metal-dependent hydrolase Tneu_1348 from Pyrobaculum neutrophilum (strain DSM 2338 / JCM 9278 / NBRC 100436 / V24Sta) (Thermoproteus neutrophilus).